The sequence spans 104 residues: Small ribosomal subunit protein uS10 (104 aa).

This sequence belongs to the universal ribosomal protein uS10 family. In terms of assembly, part of the 30S ribosomal subunit.

In terms of biological role, involved in the binding of tRNA to the ribosomes. The protein is Small ribosomal subunit protein uS10 of Nitrosococcus oceani (strain ATCC 19707 / BCRC 17464 / JCM 30415 / NCIMB 11848 / C-107).